Reading from the N-terminus, the 222-residue chain is PKHD-type hydroxylase Syncc9902_2001 (222 aa).

One can recognise a Fe2OG dioxygenase domain in the interval 80–174 (RVHSILISRS…RLVCVGWIES (95 aa)). Fe cation contacts are provided by H98, D100, and H155. Residue R165 participates in 2-oxoglutarate binding.

Fe(2+) serves as cofactor. Requires L-ascorbate as cofactor.

This chain is PKHD-type hydroxylase Syncc9902_2001, found in Synechococcus sp. (strain CC9902).